The sequence spans 803 residues: MSSKIRPSADDKKLQRVLYFFLERVRAAKDVSGQLLSPLIDNASVDTASVSPSSNGRPTTLKSIQSKIDEFQYHDFSEFVSDLAYLFINVKALYEGTQTYSFVQALEEFCIQQLRTFQQQGYIPVITWPNTDSPSATTSSPISRNPEYSVSPPNGSKFVKNEDEAYDSDLYVEEEDSDVKGRSMVGRDGRYKSEDLKRRKLQPSSKPLSSLEARAKVIMRQVRRYRDGSGRQLFAPFERLPDPRMFPEYYQAIEQPMALEVIQKKLSKHRYETIEQFVDDFNLMFDNAKSFNDPSSQVYRDADFLKNYLADVLRLEAGKLDSEFFNYETDSRASPQLPKNDIQPAVSIDGTLLNVGDWVLIRNPADSSKPIVSQIYRIWKSDDDINYVTVCWYLRPEQTVHRADAVFYENEVFKTSLYRDHPVSEIVGRCFVMYITRYIRGRPKGIRSTPVFVCESRYNDDTKQFSKIKSWKACMPQEVSGSEYEMILFDRPITLTKVASPLLHLLASKSQGLPSPATTDSNTHMLPSQGSLLPPSSISETKSFSTKASTPLSTDDIATPLSSAPNPPSVMPTYARKTSSHSERSSHSSYHNSSHVPTAAFNSPIMRTSTKSTSPIPARPFYAQSGSLQSLNTTQHSHQISGGHSGRMNVPYAKLSYTSHNGRHGGSNGNISGAKTPMTNYTINSMPSLPVFPPAFIVPGTHQKLDESSPVPGIDDVTVINTETAKMLDKDEHQNVLWYTVPPLDPIPLENRNGSLTHSVEYVLYKKSKGSQVITEKARSNELSREAKFENLVASLSDALIPP.

The 109-residue stretch at 9 to 117 (ADDKKLQRVL…EFCIQQLRTF (109 aa)) folds into the Bromo 1 domain. The segment covering 128 to 154 (WPNTDSPSATTSSPISRNPEYSVSPPN) has biased composition (polar residues). The tract at residues 128–160 (WPNTDSPSATTSSPISRNPEYSVSPPNGSKFVK) is disordered. A Phosphoserine modification is found at serine 168. The interval 174–206 (EEDSDVKGRSMVGRDGRYKSEDLKRRKLQPSSK) is disordered. Positions 178–197 (DVKGRSMVGRDGRYKSEDLK) are enriched in basic and acidic residues. The 111-residue stretch at 206–316 (KPLSSLEARA…NYLADVLRLE (111 aa)) folds into the Bromo 2 domain. A phosphoserine mark is found at serine 331 and serine 334. One can recognise a BAH domain in the interval 351–469 (TLLNVGDWVL…DDTKQFSKIK (119 aa)). Residues 512 to 525 (GLPSPATTDSNTHM) show a composition bias toward polar residues. Positions 512–616 (GLPSPATTDS…RTSTKSTSPI (105 aa)) are disordered. The span at 526 to 539 (LPSQGSLLPPSSIS) shows a compositional bias: low complexity. 2 stretches are compositionally biased toward polar residues: residues 540 to 553 (ETKS…TPLS) and 605 to 615 (IMRTSTKSTSP).

The protein belongs to the RSC1 family. As to quaternary structure, component of the RSC complex composed of at least arp9, arp42, rsc1, rsc4, rsc7, rsc9, rsc58, sfh1, snf21, ssr1, ssr2, ssr3 and ssr4. The complex interacts with histone and histone variant components of centromeric chromatin.

It is found in the nucleus. Component of the chromatin structure remodeling complex (RSC), which is involved in transcription regulation and nucleosome positioning. Controls particularly membrane and organelle development genes. In Schizosaccharomyces pombe (strain 972 / ATCC 24843) (Fission yeast), this protein is Chromatin structure-remodeling complex subunit rsc1 (rsc1).